A 345-amino-acid polypeptide reads, in one-letter code: Dihydroorotate dehydrogenase (quinone) (345 aa).

Residues 65–69 and T89 each bind FMN; that span reads AGLDK. K69 contacts substrate. 114–118 contacts substrate; sequence NRLGF. FMN-binding residues include N146 and N179. Substrate is bound at residue N179. The active-site Nucleophile is S182. N184 contributes to the substrate binding site. FMN is bound by residues K224 and T252. 253 to 254 lines the substrate pocket; sequence NT. Residues G275, G304, and 325–326 each bind FMN; that span reads YT.

Belongs to the dihydroorotate dehydrogenase family. Type 2 subfamily. As to quaternary structure, monomer. Requires FMN as cofactor.

The protein localises to the cell membrane. It catalyses the reaction (S)-dihydroorotate + a quinone = orotate + a quinol. It functions in the pathway pyrimidine metabolism; UMP biosynthesis via de novo pathway; orotate from (S)-dihydroorotate (quinone route): step 1/1. In terms of biological role, catalyzes the conversion of dihydroorotate to orotate with quinone as electron acceptor. This chain is Dihydroorotate dehydrogenase (quinone), found in Leptothrix cholodnii (strain ATCC 51168 / LMG 8142 / SP-6) (Leptothrix discophora (strain SP-6)).